Consider the following 574-residue polypeptide: Splicing factor U2af large subunit A (574 aa).

Residues 1 to 180 (MAEHEEQPYE…SKRVSGFDQG (180 aa)) are disordered. Low complexity predominate over residues 18–41 (PAPASAYAEYPAPEGSPPAAAAKP). A compositionally biased stretch (basic and acidic residues) spans 53-143 (RSQHETQPHD…ERRRDRDRDG (91 aa)). Basic residues predominate over residues 144 to 172 (HRRHRSRSRSPSKGRDRRSRSRSRSRSSK). RRM domains lie at 238 to 321 (RRVY…RPTD), 358 to 436 (DRIF…RANQ), and 479 to 565 (QVVS…YPED).

The protein belongs to the splicing factor SR family.

The protein localises to the nucleus. Its function is as follows. Necessary for the splicing of pre-mRNA. This Oryza sativa subsp. japonica (Rice) protein is Splicing factor U2af large subunit A (U2AF65A).